The sequence spans 404 residues: Cysteine desulfurase IscS (404 aa).

Pyridoxal 5'-phosphate contacts are provided by residues 75–76 (AT), Asn-155, Gln-183, and 203–205 (SAH). An N6-(pyridoxal phosphate)lysine modification is found at Lys-206. Pyridoxal 5'-phosphate is bound at residue Thr-243. Residue Cys-328 is the Cysteine persulfide intermediate of the active site. Residue Cys-328 participates in [2Fe-2S] cluster binding.

It belongs to the class-V pyridoxal-phosphate-dependent aminotransferase family. NifS/IscS subfamily. As to quaternary structure, homodimer. Forms a heterotetramer with IscU, interacts with other sulfur acceptors. Pyridoxal 5'-phosphate serves as cofactor.

It is found in the cytoplasm. It catalyses the reaction (sulfur carrier)-H + L-cysteine = (sulfur carrier)-SH + L-alanine. Its pathway is cofactor biosynthesis; iron-sulfur cluster biosynthesis. Functionally, master enzyme that delivers sulfur to a number of partners involved in Fe-S cluster assembly, tRNA modification or cofactor biosynthesis. Catalyzes the removal of elemental sulfur atoms from cysteine to produce alanine. Functions as a sulfur delivery protein for Fe-S cluster synthesis onto IscU, an Fe-S scaffold assembly protein, as well as other S acceptor proteins. In Vibrio cholerae serotype O1 (strain M66-2), this protein is Cysteine desulfurase IscS.